Here is a 997-residue protein sequence, read N- to C-terminus: Chromosomal passenger complex protein bir1 (997 aa).

BIR repeat units follow at residues arginine 25–tyrosine 99 and arginine 120–threonine 194. Zn(2+) is bound by residues cysteine 163, cysteine 166, histidine 183, and cysteine 190. 5 disordered regions span residues glutamate 217–glycine 329, threonine 370–glutamate 527, threonine 682–glutamate 701, serine 755–alanine 782, and arginine 817–valine 838. Positions threonine 240–asparagine 252 are enriched in polar residues. Residues proline 288–lysine 299 are compositionally biased toward basic residues. Residues serine 311 to leucine 320 show a composition bias toward acidic residues. Over residues threonine 370–serine 392 the composition is skewed to polar residues. Residues serine 408–valine 423 are compositionally biased toward low complexity. Residues glutamate 426–leucine 451 show a composition bias toward basic and acidic residues. Polar residues-rich tracts occupy residues lysine 463 to aspartate 476 and arginine 485 to isoleucine 512. Positions proline 756 to glutamate 772 are enriched in polar residues. Over residues threonine 773–alanine 782 the composition is skewed to basic and acidic residues. Polar residues predominate over residues arginine 817 to asparagine 830.

As to quaternary structure, component of the CPC complex at least composed of ark1, bir1 and pic1. Interacts with the mitotic checkpoint complex (MCC) subunit mad3. Phosphorylated by ark1.

Its subcellular location is the nucleus. It is found in the cytoplasm. It localises to the cytoskeleton. The protein localises to the spindle. The protein resides in the chromosome. Its subcellular location is the centromere. Functionally, component of the chromosomal passenger complex (CPC), a complex that acts as a key regulator of chromosome segregation and cytokinesis. Has a role in chromosome segregation by recruiting condensin and ark1 kinase to appropriate sites as the cell progresses through mitosis. Ark1 activity depends upon bir1 function and phosphorylation. Ark1 with bir1 function is required for full-scale association with kinetochores and formation of a complex with mad3. This is Chromosomal passenger complex protein bir1 (bir1) from Schizosaccharomyces pombe (strain 972 / ATCC 24843) (Fission yeast).